The primary structure comprises 389 residues: Phospho-N-acetylmuramoyl-pentapeptide-transferase (389 aa).

A run of 10 helical transmembrane segments spans residues 25–45, 73–93, 97–117, 134–154, 190–210, 222–242, 258–278, 286–306, 311–331, and 366–386; these read RAVMATVTALLIGLAAGPWVI, TMGGVLILIGIFISCILWADL, FIWIVMIVTFGFGLVGWVDDY, FFWQTLIGLFAAIYLAFSVSE, VSYPLGIMGFIILSYLVIVGS, GLVIMPVILVGAALGAFAYVM, GAGELMIFCGAMGGAGLAFLW, VFMGDVGALALGGALGTIAVI, IVLFVMGGIFVAETISVMLQV, and QVVVRFWIITILLVLIGLSSL.

Belongs to the glycosyltransferase 4 family. MraY subfamily. It depends on Mg(2+) as a cofactor.

The protein localises to the cell inner membrane. It carries out the reaction UDP-N-acetyl-alpha-D-muramoyl-L-alanyl-gamma-D-glutamyl-meso-2,6-diaminopimeloyl-D-alanyl-D-alanine + di-trans,octa-cis-undecaprenyl phosphate = di-trans,octa-cis-undecaprenyl diphospho-N-acetyl-alpha-D-muramoyl-L-alanyl-D-glutamyl-meso-2,6-diaminopimeloyl-D-alanyl-D-alanine + UMP. Its pathway is cell wall biogenesis; peptidoglycan biosynthesis. In terms of biological role, catalyzes the initial step of the lipid cycle reactions in the biosynthesis of the cell wall peptidoglycan: transfers peptidoglycan precursor phospho-MurNAc-pentapeptide from UDP-MurNAc-pentapeptide onto the lipid carrier undecaprenyl phosphate, yielding undecaprenyl-pyrophosphoryl-MurNAc-pentapeptide, known as lipid I. This is Phospho-N-acetylmuramoyl-pentapeptide-transferase from Polynucleobacter necessarius subsp. necessarius (strain STIR1).